The chain runs to 473 residues: MNWEMVIGLEVHIQLSTKSKLFSTSATKYGQHQNTQAAFLDLGLPGTLPVVNKEAIRKAVIFGLAVDAKISKDSFFARKNYFYPDLSKGYQISQSTNPIVQEGRLEIETSKGLKTIRIERAHLEEDAGKSVHGYIAGETGLDYNRAGTPLLEIVTYPDFRSAEEVVAYLKKLHQLVKHLGICDGNMQEGSFRCDVNLSIRPQGQAKFGTRAELKNINSFRFIDKAIEYEYARQVSVLESGGEVVQETRLYDADANETRSMRAKEDAFDYRYFPDPDLLPLVITDEYIESIKKQMPLKSEEREAVYREHLAEQEVEFLLSNLEIADYYDKVAVVIGYKPAYNWITVDLISTLNRAEKEFSSDVVPAEILLEIIANVQKDIISQANAKKVIAEYIDAPSAIEAIIEKLGLKQVSDEGMIRELVQGIIAANPQQAADFKAGKTKLMSFFVGQAMKASKGKANPKQVNQIVQEELNK.

It belongs to the GatB/GatE family. GatB subfamily. As to quaternary structure, heterotrimer of A, B and C subunits.

It carries out the reaction L-glutamyl-tRNA(Gln) + L-glutamine + ATP + H2O = L-glutaminyl-tRNA(Gln) + L-glutamate + ADP + phosphate + H(+). It catalyses the reaction L-aspartyl-tRNA(Asn) + L-glutamine + ATP + H2O = L-asparaginyl-tRNA(Asn) + L-glutamate + ADP + phosphate + 2 H(+). Its function is as follows. Allows the formation of correctly charged Asn-tRNA(Asn) or Gln-tRNA(Gln) through the transamidation of misacylated Asp-tRNA(Asn) or Glu-tRNA(Gln) in organisms which lack either or both of asparaginyl-tRNA or glutaminyl-tRNA synthetases. The reaction takes place in the presence of glutamine and ATP through an activated phospho-Asp-tRNA(Asn) or phospho-Glu-tRNA(Gln). This Francisella tularensis subsp. tularensis (strain FSC 198) protein is Aspartyl/glutamyl-tRNA(Asn/Gln) amidotransferase subunit B.